The sequence spans 796 residues: Lon protease 2 (796 aa).

Residues 9-206 (LPIVILKENV…KLIVNLSIEI (198 aa)) form the Lon N-terminal domain. 352 to 359 (GPPGIGKT) contributes to the ATP binding site. Positions 617 to 796 (IDSSGFVYGL…EEVFDYLNII (180 aa)) constitute a Lon proteolytic domain. Active-site residues include Ser-702 and Lys-745.

This sequence belongs to the peptidase S16 family. Homohexamer. Organized in a ring with a central cavity.

It is found in the cytoplasm. It catalyses the reaction Hydrolysis of proteins in presence of ATP.. Functionally, ATP-dependent serine protease that mediates the selective degradation of mutant and abnormal proteins as well as certain short-lived regulatory proteins. Required for cellular homeostasis and for survival from DNA damage and developmental changes induced by stress. Degrades polypeptides processively to yield small peptide fragments that are 5 to 10 amino acids long. Binds to DNA in a double-stranded, site-specific manner. The sequence is that of Lon protease 2 (lon2) from Borreliella burgdorferi (strain ATCC 35210 / DSM 4680 / CIP 102532 / B31) (Borrelia burgdorferi).